A 474-amino-acid polypeptide reads, in one-letter code: ATP synthase subunit beta, chloroplastic (474 aa).

Position 155–162 (155–162) interacts with ATP; it reads GGAGVGKT.

The protein belongs to the ATPase alpha/beta chains family. In terms of assembly, F-type ATPases have 2 components, CF(1) - the catalytic core - and CF(0) - the membrane proton channel. CF(1) has five subunits: alpha(3), beta(3), gamma(1), delta(1), epsilon(1). CF(0) has four main subunits: a(1), b(1), b'(1) and c(9-12).

It localises to the plastid. The protein resides in the chloroplast thylakoid membrane. The enzyme catalyses ATP + H2O + 4 H(+)(in) = ADP + phosphate + 5 H(+)(out). Its function is as follows. Produces ATP from ADP in the presence of a proton gradient across the membrane. The catalytic sites are hosted primarily by the beta subunits. The chain is ATP synthase subunit beta, chloroplastic from Thalassiosira pseudonana (Marine diatom).